A 132-amino-acid polypeptide reads, in one-letter code: Small ribosomal subunit protein uS8c (132 aa).

It belongs to the universal ribosomal protein uS8 family. As to quaternary structure, part of the 30S ribosomal subunit.

The protein localises to the plastid. It is found in the chloroplast. Its function is as follows. One of the primary rRNA binding proteins, it binds directly to 16S rRNA central domain where it helps coordinate assembly of the platform of the 30S subunit. This is Small ribosomal subunit protein uS8c (rps8) from Chaetosphaeridium globosum (Charophycean green alga).